A 364-amino-acid polypeptide reads, in one-letter code: Aminomethyltransferase (364 aa).

This sequence belongs to the GcvT family. The glycine cleavage system is composed of four proteins: P, T, L and H.

The catalysed reaction is N(6)-[(R)-S(8)-aminomethyldihydrolipoyl]-L-lysyl-[protein] + (6S)-5,6,7,8-tetrahydrofolate = N(6)-[(R)-dihydrolipoyl]-L-lysyl-[protein] + (6R)-5,10-methylene-5,6,7,8-tetrahydrofolate + NH4(+). In terms of biological role, the glycine cleavage system catalyzes the degradation of glycine. In Proteus mirabilis (strain HI4320), this protein is Aminomethyltransferase.